The primary structure comprises 396 residues: uncharacterized protein (396 aa).

This is an uncharacterized protein from Pseudomonas amyloderamosa.